Consider the following 241-residue polypeptide: Phosducin-like protein 2 (241 aa).

Positions 34–202 constitute a Phosducin domain; the sequence is VLRLQKEAMV…EWKLAEVGAI (169 aa). The thioredoxin fold stretch occupies residues 89-241; that stretch reads FGELREISGN…DSSNSDNDTK (153 aa).

Belongs to the phosducin family. In terms of assembly, interacts with the CCT chaperonin complex and actin. Testis-specific.

Its subcellular location is the endoplasmic reticulum. Functionally, essential for male fertility, spermiogenesis and acrosome formation. The protein is Phosducin-like protein 2 (PDCL2) of Homo sapiens (Human).